A 91-amino-acid polypeptide reads, in one-letter code: Uteroglobin (91 aa).

A signal peptide spans 1 to 21 (MKLAVTLTLVTLALCCSSASA).

Belongs to the secretoglobin family. As to quaternary structure, antiparallel homodimer; disulfide-linked. Interaction with LMBR1L has been observed in PubMed:16423471, but not in PubMed:23964685. In terms of tissue distribution, club cells (nonciliated cells of the surface epithelium of the pulmonary airways).

The protein resides in the secreted. Functionally, binds phosphatidylcholine, phosphatidylinositol, polychlorinated biphenyls (PCB) and weakly progesterone, potent inhibitor of phospholipase A2. In Homo sapiens (Human), this protein is Uteroglobin (SCGB1A1).